A 164-amino-acid chain; its full sequence is Cyanate hydratase (164 aa).

Catalysis depends on residues Arg90, Glu93, and Ser116.

The protein belongs to the cyanase family.

It catalyses the reaction cyanate + hydrogencarbonate + 3 H(+) = NH4(+) + 2 CO2. Functionally, catalyzes the reaction of cyanate with bicarbonate to produce ammonia and carbon dioxide. The chain is Cyanate hydratase from Ricinus communis (Castor bean).